Here is a 130-residue protein sequence, read N- to C-terminus: Small ribosomal subunit protein uS11c (130 aa).

It belongs to the universal ribosomal protein uS11 family. As to quaternary structure, part of the 30S ribosomal subunit.

It localises to the plastid. Its subcellular location is the chloroplast. This Oedogonium cardiacum (Filamentous green alga) protein is Small ribosomal subunit protein uS11c.